Here is a 492-residue protein sequence, read N- to C-terminus: Bifunctional purine biosynthesis protein PurH (492 aa).

In terms of domain architecture, MGS-like spans Met1–Val144.

The protein belongs to the PurH family.

The enzyme catalyses (6R)-10-formyltetrahydrofolate + 5-amino-1-(5-phospho-beta-D-ribosyl)imidazole-4-carboxamide = 5-formamido-1-(5-phospho-D-ribosyl)imidazole-4-carboxamide + (6S)-5,6,7,8-tetrahydrofolate. The catalysed reaction is IMP + H2O = 5-formamido-1-(5-phospho-D-ribosyl)imidazole-4-carboxamide. It functions in the pathway purine metabolism; IMP biosynthesis via de novo pathway; 5-formamido-1-(5-phospho-D-ribosyl)imidazole-4-carboxamide from 5-amino-1-(5-phospho-D-ribosyl)imidazole-4-carboxamide (10-formyl THF route): step 1/1. Its pathway is purine metabolism; IMP biosynthesis via de novo pathway; IMP from 5-formamido-1-(5-phospho-D-ribosyl)imidazole-4-carboxamide: step 1/1. The sequence is that of Bifunctional purine biosynthesis protein PurH from Macrococcus caseolyticus (strain JCSC5402) (Macrococcoides caseolyticum).